A 331-amino-acid polypeptide reads, in one-letter code: Phenylalanine--tRNA ligase alpha subunit (331 aa).

A Mg(2+)-binding site is contributed by Glu252.

Belongs to the class-II aminoacyl-tRNA synthetase family. Phe-tRNA synthetase alpha subunit type 1 subfamily. In terms of assembly, tetramer of two alpha and two beta subunits. Mg(2+) serves as cofactor.

It localises to the cytoplasm. It carries out the reaction tRNA(Phe) + L-phenylalanine + ATP = L-phenylalanyl-tRNA(Phe) + AMP + diphosphate + H(+). The sequence is that of Phenylalanine--tRNA ligase alpha subunit from Stenotrophomonas maltophilia (strain R551-3).